We begin with the raw amino-acid sequence, 452 residues long: Retinoid-inducible serine carboxypeptidase (452 aa).

A signal peptide spans 1–28 (MELSRRICLVRLWLLLLSFLLGFSAGSA). 3 N-linked (GlcNAc...) asparagine glycosylation sites follow: N64, N102, and N126. S167 is a catalytic residue. 2 N-linked (GlcNAc...) asparagine glycosylation sites follow: N192 and N362. Residues D371 and H431 contribute to the active site.

This sequence belongs to the peptidase S10 family.

Its subcellular location is the secreted. Functionally, may be involved in vascular wall and kidney homeostasis. The protein is Retinoid-inducible serine carboxypeptidase (Scpep1) of Mus musculus (Mouse).